The following is a 607-amino-acid chain: CRISPR-associated DNA-binding protein Cas12m (607 aa).

A wedge domain (WED-N) region spans residues Met-1–Gln-16. A recognition domain (REC) region spans residues Met-17–Thr-189. The interval Trp-50 to Glu-124 is roof in REC. The span at Ala-74–Arg-83 shows a compositional bias: basic and acidic residues. Residues Ala-74 to Val-94 are disordered. The tract at residues Gly-190–Glu-315 is wedge domain (WED-C). The tract at residues Gly-316–Val-559 is ruvC-I. Residues Ser-391–Glu-452 are ruvC insertion. A target nucleic-acid binding (TNB) region spans residues Ser-552–Asp-588. Zn(2+) contacts are provided by His-560, Cys-563, Cys-580, and Cys-583. The ruvC-II stretch occupies residues Thr-589 to Asn-607. Asp-590 is a binding site for Mg(2+).

It belongs to the CRISPR-associated DNA-binding protein Cas12m family. Binds crRNA and target dsDNA as a monomer. It depends on Mg(2+) as a cofactor. Zn(2+) is required as a cofactor.

Functionally, CRISPR (clustered regularly interspaced short palindromic repeat), is an adaptive immune system that provides protection against mobile genetic elements (viruses, transposable elements and conjugative plasmids). CRISPR clusters contain sequences complementary to antecedent mobile elements and target invading nucleic acids. CRISPR clusters are transcribed and processed into CRISPR RNA (crRNA). Recognizes a short motif in the CRISPR repeat sequences (the 5' PAM or protospacer adjacent motif, 5'-TTN-3' in this organism) to help distinguish self versus nonself, as targets within the bacterial CRISPR locus do not have PAMs. Upon expression in E.coli as a CRISPR locus inhibits plasmid propagation when targeted to regions essential for plasmid propagation (replication origin and a selectable marker); inhibits expression of a non-selectable marker, probably at the transcriptional level. Protects E.coli against bacteriophage M13mp18, to a lesser extent against lambda and VpaE1 as well as phage T4 with hydroxymethyl or unmodified (but not glycosylated) cytosines. Preferentially binds to its associated crRNA. Cas12m-crRNA binds DNA in a PAM-dependent, crRNA-guided fashion. Binds a 20-bp crRNA-ss-target DNA heteroduplex, in a 52 nucleotide crRNA. No dsDNA, ssDNA or RNA nuclease activity is seen for the crRNA-Cas12m complex. Probably required for pre-crRNA processing to mature crRNA. The sequence is that of CRISPR-associated DNA-binding protein Cas12m from Gordonia otitidis (strain DSM 44809 / CCUG 52243 / JCM 12355 / NBRC 100426 / IFM 10032).